The sequence spans 346 residues: DNA-directed RNA polymerases I and III subunit RPAC1 (346 aa).

N-acetylalanine is present on Ala-2. Ser-4 is modified (phosphoserine).

Belongs to the archaeal Rpo3/eukaryotic RPB3 RNA polymerase subunit family. As to quaternary structure, component of the RNA polymerase I and RNA polymerase III complexes consisting of at least 13 and 17 subunits, respectively. Pol I complex consists of a ten-subunit catalytic core composed of POLR1A/RPA1, POLR1B/RPA2, POLR1C/RPAC1, POLR1D/RPAC2, POLR1H/RPA12, POLR2E/RPABC1, POLR2F/RPABC2, POLR2H/RPABC3, POLR2K/RPABC4 and POLR2L/RPABC5; a mobile stalk subunit POLR1F/RPA43 protruding from the core and additional subunits homologous to general transcription factors POLR1E/RPA49 and POLR1G/RPA34. Part of Pol I pre-initiation complex (PIC), in which Pol I core assembles with RRN3 and promoter-bound UTBF and SL1/TIF-IB complex. Pol III complex consists of a ten-subunit catalytic core composed of POLR3A/RPC1, POLR3B/RPC2, POLR1C/RPAC1, POLR1D/RPAC2, POLR3K/RPC10, POLR2E/RPABC1, POLR2F/RPABC2, POLR2H/RPABC3, POLR2K/RPABC4 and POLR2L/RPABC5; a mobile stalk composed of two subunits POLR3H/RPC8 and CRCP/RPC9, protruding from the core and functioning primarily in transcription initiation; and additional subunits homologous to general transcription factors of the RNA polymerase II machinery, POLR3C/RPC3-POLR3F/RPC6-POLR3G/RPC7 heterotrimer required for transcription initiation and POLR3D/RPC4-POLR3E/RPC5 heterodimer involved in both transcription initiation and termination.

It localises to the nucleus. Its subcellular location is the nucleolus. The protein localises to the cytoplasm. It is found in the cytosol. Functionally, DNA-dependent RNA polymerase catalyzes the transcription of DNA into RNA using the four ribonucleoside triphosphates as substrates. Common component of RNA polymerases I and III which synthesize ribosomal RNA precursors and short non-coding RNAs including 5S rRNA, snRNAs, tRNAs and miRNAs, respectively. POLR1C/RPAC1 is part of the polymerase core and may function as a clamp element that moves to open and close the cleft. The chain is DNA-directed RNA polymerases I and III subunit RPAC1 from Homo sapiens (Human).